A 426-amino-acid polypeptide reads, in one-letter code: Gamma-glutamyl phosphate reductase (426 aa).

This sequence belongs to the gamma-glutamyl phosphate reductase family.

It localises to the cytoplasm. It catalyses the reaction L-glutamate 5-semialdehyde + phosphate + NADP(+) = L-glutamyl 5-phosphate + NADPH + H(+). Its pathway is amino-acid biosynthesis; L-proline biosynthesis; L-glutamate 5-semialdehyde from L-glutamate: step 2/2. In terms of biological role, catalyzes the NADPH-dependent reduction of L-glutamate 5-phosphate into L-glutamate 5-semialdehyde and phosphate. The product spontaneously undergoes cyclization to form 1-pyrroline-5-carboxylate. This Cupriavidus metallidurans (strain ATCC 43123 / DSM 2839 / NBRC 102507 / CH34) (Ralstonia metallidurans) protein is Gamma-glutamyl phosphate reductase.